The chain runs to 786 residues: Endonuclease MutS2 (786 aa).

332–339 (GPNTGGKT) is a binding site for ATP. In terms of domain architecture, Smr spans 711–786 (IDLRGMDSEE…GTGVTVVILK (76 aa)).

The protein belongs to the DNA mismatch repair MutS family. MutS2 subfamily. As to quaternary structure, homodimer. Binds to stalled ribosomes, contacting rRNA.

Functionally, endonuclease that is involved in the suppression of homologous recombination and thus may have a key role in the control of bacterial genetic diversity. Its function is as follows. Acts as a ribosome collision sensor, splitting the ribosome into its 2 subunits. Detects stalled/collided 70S ribosomes which it binds and splits by an ATP-hydrolysis driven conformational change. Acts upstream of the ribosome quality control system (RQC), a ribosome-associated complex that mediates the extraction of incompletely synthesized nascent chains from stalled ribosomes and their subsequent degradation. Probably generates substrates for RQC. This is Endonuclease MutS2 from Clostridium perfringens (strain ATCC 13124 / DSM 756 / JCM 1290 / NCIMB 6125 / NCTC 8237 / Type A).